Consider the following 346-residue polypeptide: Transcription termination factor 4, mitochondrial (346 aa).

The transit peptide at 1-42 (MASLGRQVPEWHRLLALSWACLVRQTPHLREQKQMSPSLSCK) directs the protein to the mitochondrion. MTERF repeat units lie at residues 142–172 (FNAL…LGLG), 177–204 (KRVL…LREK), 209–239 (AQHI…YAYF), 245–270 (HLDI…YLER), and 290–318 (LRNI…VFKK). The segment at 310-327 (VEEFQVFKKLLDQEEEEE) is dimerization with NSUN4. Residues 321-346 (DQEEEEESESHASEEEEEEEEEEELL) are disordered. The span at 322–346 (QEEEEESESHASEEEEEEEEEEELL) shows a compositional bias: acidic residues.

The protein belongs to the mTERF family. In terms of assembly, heterodimer with NSUN4; this interaction may be required for NSUN4 recruitment to the mitochondrial large ribosomal subunit. In terms of tissue distribution, widely expressed, with highest levels in liver, followed by testis, kidney and brain.

The protein resides in the mitochondrion. In terms of biological role, regulator of mitochondrial ribosome biogenesis and translation. Binds to mitochondrial ribosomal RNAs 16S, 12S and 7S. Targets NSUN4 RNA methyltransferase to the mitochondrial large ribosomal subunit. This is Transcription termination factor 4, mitochondrial (Mterf4) from Mus musculus (Mouse).